The chain runs to 240 residues: Probable transcriptional regulatory protein HPAG1_0159 (240 aa).

This sequence belongs to the TACO1 family.

It localises to the cytoplasm. In Helicobacter pylori (strain HPAG1), this protein is Probable transcriptional regulatory protein HPAG1_0159.